Reading from the N-terminus, the 380-residue chain is Ankyrin repeat domain-containing protein 63 (380 aa).

ANK repeat units lie at residues 11 to 40, 46 to 79, 83 to 112, 116 to 145, and 153 to 182; these read AGTRTFLEAMQAGKVHLARFVLDALDRSII, QGRTPLMVAVGLPDPALRARFVRLLLEQGAAVNL, RGRTALSLACERGHLDAVQLLVQFSGDPEA, AGNSPVMWAAACGHGAVLEFLVRSFRRLGL, and AGLTALQLAAARGHGTCVQALTGPWGRAAA. 2 stretches are compositionally biased toward low complexity: residues 181–203 and 216–226; these read AAAAAARGSNSDSPPGRPAPAAS and RPLLARFARAA. Positions 181-256 are disordered; it reads AAAAAARGSN…GSERPELGRS (76 aa). S193 is modified (phosphoserine). A Phosphoserine modification is found at S294. The interval 309–368 is disordered; the sequence is PIGLSPHPEGGPGSGRLGLRRRSTAPDIPSLVGEAPGPESGPELEANALSVSVPGPNPWQ.

The sequence is that of Ankyrin repeat domain-containing protein 63 from Homo sapiens (Human).